A 486-amino-acid chain; its full sequence is Arginine deiminase (486 aa).

The active-site Amidino-cysteine intermediate is the cysteine 476.

The protein belongs to the arginine deiminase family.

Its subcellular location is the cytoplasm. It carries out the reaction L-arginine + H2O = L-citrulline + NH4(+). The protein operates within amino-acid degradation; L-arginine degradation via ADI pathway; carbamoyl phosphate from L-arginine: step 1/2. Its function is as follows. Involved in the arginine deiminase pathway of fermentative arginine utilization. The protein is Arginine deiminase (arcA) of Halobacterium salinarum (strain ATCC 29341 / DSM 671 / R1).